The chain runs to 211 residues: MKVTAAFAGLLVTAFAPPVPEPVLVSRSAGINYVQNYNGNLGDFTYDESAGTFSMYWEDGVSSDFVVGLGWTTGSSNAITYSAEYSASGSSSYLAVYGWVNLSQAEYYIVEDYGDYNPCSSATSLGTEYSDGSTYQVCTDTRTNEPSITGTSTFTQYFSVRESTRTSGTVTVAIHFNFWAQHGFGNSDFNYQVMAVEAWSGACSASVTISS.

Residues 1–16 form the signal peptide; the sequence is MKVTAAFAGLLVTAFA. The region spanning 19–210 is the GH11 domain; that stretch reads VPEPVLVSRS…GACSASVTIS (192 aa). A glycan (N-linked (GlcNAc...) asparagine) is linked at Asn101. The active-site Nucleophile is Glu106. The Proton donor role is filled by Glu197.

Belongs to the glycosyl hydrolase 11 (cellulase G) family.

Its subcellular location is the secreted. It catalyses the reaction Endohydrolysis of (1-&gt;4)-beta-D-xylosidic linkages in xylans.. Its pathway is glycan degradation; xylan degradation. In terms of biological role, endo-1,4-beta-xylanase involved in the hydrolysis of xylan, a major structural heterogeneous polysaccharide found in plant biomass representing the second most abundant polysaccharide in the biosphere, after cellulose. This is Endo-1,4-beta-xylanase 4 (XYN4) from Aspergillus niger.